The sequence spans 595 residues: ATPase family AAA domain-containing protein 3 (595 aa).

Residues 1-48 (MSWLFGVQKNATPQIPDDFQAGAAPGGPQQPGQGQRQEGNSKMAYSFD) form a disordered region. Over 1–243 (MSWLFGVQKN…LNQFLNDKTK (243 aa)) the chain is Mitochondrial intermembrane. Over residues 20–35 (QAGAAPGGPQQPGQGQ) the composition is skewed to low complexity. 2 coiled-coil regions span residues 80–107 (VTRQKEVENETKKIEAQLANMKSEHIRV) and 140–175 (EELAMKARMQEESLRKQEESVKKQEQLRKQTIEHEL). The chain crosses the membrane as a helical span at residues 244–260 (IAAAVGGLTALAVGWYT). Over 261 to 595 (AKRGTGVTAR…GTTLKRETAV (335 aa)) the chain is Mitochondrial matrix. 349–356 (GPPGTGKT) lines the ATP pocket. The short motif at 592–595 (ETAV) is the PDZ-binding element.

It belongs to the AAA ATPase family.

The protein resides in the mitochondrion inner membrane. It localises to the mitochondrion matrix. Its subcellular location is the mitochondrion nucleoid. In terms of biological role, essential for mitochondrial network organization, mitochondrial metabolism and cell growth at organism and cellular level. Important during development for the up-regulation of mitochondrial activity during the transition to higher larval stages. Regulates mitochondrial iron homeostasis. May play an important role in mitochondrial protein synthesis. May also participate in mitochondrial DNA replication. May bind to mitochondrial DNA D-loops and contribute to nucleoid stability. Plays a role in regulating the production of reactive oxygen species in response to heat stress. The polypeptide is ATPase family AAA domain-containing protein 3 (Caenorhabditis elegans).